A 347-amino-acid polypeptide reads, in one-letter code: Protein RecA (347 aa).

Residue 66-73 coordinates ATP; sequence GPESSGKT.

It belongs to the RecA family.

The protein resides in the cytoplasm. Functionally, can catalyze the hydrolysis of ATP in the presence of single-stranded DNA, the ATP-dependent uptake of single-stranded DNA by duplex DNA, and the ATP-dependent hybridization of homologous single-stranded DNAs. It interacts with LexA causing its activation and leading to its autocatalytic cleavage. This is Protein RecA from Burkholderia cepacia (Pseudomonas cepacia).